We begin with the raw amino-acid sequence, 185 residues long: MLNDVISEYEAHLKKATEALRHHLASIRTGRASSALVEHLHVEAYGMTMPLNQLANISVPEPRLIVIQPYDANMIKAIEKAIQQSDLGLNPSNDGRVIRLPVPPLTEERRRELVKMVRHRVEEVKISVRNQRRDAIDDLKKLEAEKLISEDELHRGQERIQQLTDRCTRELDQIGAEKEAEVMAV.

The protein belongs to the RRF family.

Its subcellular location is the cytoplasm. Responsible for the release of ribosomes from messenger RNA at the termination of protein biosynthesis. May increase the efficiency of translation by recycling ribosomes from one round of translation to another. The sequence is that of Ribosome-recycling factor from Chloroflexus aurantiacus (strain ATCC 29364 / DSM 637 / Y-400-fl).